Here is a 261-residue protein sequence, read N- to C-terminus: tRNA(His) guanylyltransferase (261 aa).

Residues Asp-29, Gly-30, and Asp-76 each contribute to the Mg(2+) site. Residues 29–34 (DGKGFH) and 75–76 (SD) contribute to the GTP site.

Belongs to the tRNA(His) guanylyltransferase family. Requires Mg(2+) as cofactor.

The catalysed reaction is a 5'-end ribonucleotide-tRNA(His) + GTP + ATP + H2O = a 5'-end phospho-guanosine-ribonucleotide-tRNA(His) + AMP + 2 diphosphate + H(+). Functionally, adds a GMP to the 5'-end of tRNA(His) after transcription and RNase P cleavage. In Schizosaccharomyces pombe (strain 972 / ATCC 24843) (Fission yeast), this protein is tRNA(His) guanylyltransferase (thg1).